Reading from the N-terminus, the 5087-residue chain is Nonribosomal peptide synthetase sidC (5087 aa).

The tract at residues 165–563 is adenylation 1; the sequence is HEMVRHTGNE…NGELQCMGRI (399 aa). The Carrier 1 domain maps to 671 to 744; the sequence is EPAGDIEQKI…KMAALVLKSQ (74 aa). Ser705 carries the post-translational modification O-(pantetheine 4'-phosphoryl)serine. Residues 782 to 1112 form a condensation 1 region; that stretch reads DIIPCSPIQT…LFDTLFVWQD (331 aa). The segment at 1217–1611 is adenylation 2; the sequence is ELAKTDSERI…GRRDDLVKIR (395 aa). The Carrier 2 domain occupies 1740–1817; that stretch reads ENLTDNEAKV…RLTRKISQSI (78 aa). Residue Ser1777 is modified to O-(pantetheine 4'-phosphoryl)serine. The segment at 1855–2272 is condensation 2; that stretch reads KILPCTSLQE…RVMDFSLVES (418 aa). Residues 2302–2378 enclose the Carrier 3 domain; that stretch reads EEWSAESLEI…EIASVLQGSK (77 aa). O-(pantetheine 4'-phosphoryl)serine is present on Ser2339. Residues 2419–2831 are condensation 3; the sequence is PCTTPQAGML…STSSSLDTAS (413 aa). An adenylation 3 region spans residues 2860 to 3258; it reads ATRHPSRVAL…GRIDDQVKLR (399 aa). The 78-residue stretch at 3387–3464 folds into the Carrier 4 domain; it reads TEDTDTIRKI…LLAKAVESPD (78 aa). Residue Ser3424 is modified to O-(pantetheine 4'-phosphoryl)serine. Residues 3506–3910 are condensation 4; it reads ITPCTSLQDG…RSLVEEPFSN (405 aa). The 77-residue stretch at 3943-4019 folds into the Carrier 5 domain; the sequence is FQWSQAASLL…TMMAEVTVNG (77 aa). Ser3980 carries the post-translational modification O-(pantetheine 4'-phosphoryl)serine. Residues 4051-4416 are condensation 5; it reads EHIYPATPLQ…EYSICVELEA (366 aa). The Carrier 6 domain maps to 4496 to 4569; the sequence is SLLEERIRDT…KMAEIVNSAR (74 aa). Position 4530 is an O-(pantetheine 4'-phosphoryl)serine (Ser4530). Residues 4610-4913 are condensation 6; it reads FLPATAGQVY…IQSDLHEIGS (304 aa). The segment at 5013–5048 is disordered; that stretch reads DVYKVSPPGSQLSQDSPEKQEANNKPSPQPSVDIEA.

It belongs to the NRP synthetase family.

The protein operates within siderophore biosynthesis. In terms of biological role, nonribosomal peptide synthetase; part of the siderophore biosynthetic pathway. Arthroderma benhamiae produces 2 types of extracellular siderophores, ferrichrome C and ferricrocin. The biosynthesis of these siderophores depends on the hydroxylation of ornithine to N(5)-hydroxyornithine, catalyzed by the monooxygenase sidA. The structure of ferricrocin differs from ferrichrome C only by a serine for alanine substitution and the assembly of both siderophores is suggested to be performed by the nonribosomal peptide synthase (NRPS) sidC. This chain is Nonribosomal peptide synthetase sidC, found in Arthroderma benhamiae (strain ATCC MYA-4681 / CBS 112371) (Trichophyton mentagrophytes).